Consider the following 591-residue polypeptide: V-type ATP synthase alpha chain (591 aa).

233–240 is a binding site for ATP; that stretch reads GPFGAGKT.

Belongs to the ATPase alpha/beta chains family.

The catalysed reaction is ATP + H2O + 4 H(+)(in) = ADP + phosphate + 5 H(+)(out). Produces ATP from ADP in the presence of a proton gradient across the membrane. The V-type alpha chain is a catalytic subunit. The protein is V-type ATP synthase alpha chain of Streptococcus pneumoniae (strain ATCC 700669 / Spain 23F-1).